The sequence spans 391 residues: Heme A synthase (391 aa).

The next 8 membrane-spanning stretches (helical) occupy residues 37–57 (IRLW…VGGL), 121–141 (RQLG…FLVA), 152–172 (LLAL…MVAS), 186–206 (LAVH…QALL), 229–249 (TTVL…VAGI), 298–318 (FLHR…WIFG), 332–352 (LLAL…LSAA), and 354–374 (WQVA…ILHA). His300 is a binding site for heme. Residue His360 coordinates heme.

It belongs to the COX15/CtaA family. Type 2 subfamily. In terms of assembly, interacts with CtaB. The cofactor is heme b.

It is found in the cell membrane. It carries out the reaction Fe(II)-heme o + 2 A + H2O = Fe(II)-heme a + 2 AH2. Its pathway is porphyrin-containing compound metabolism; heme A biosynthesis; heme A from heme O: step 1/1. Functionally, catalyzes the conversion of heme O to heme A by two successive hydroxylations of the methyl group at C8. The first hydroxylation forms heme I, the second hydroxylation results in an unstable dihydroxymethyl group, which spontaneously dehydrates, resulting in the formyl group of heme A. This chain is Heme A synthase, found in Cereibacter sphaeroides (strain ATCC 17025 / ATH 2.4.3) (Rhodobacter sphaeroides).